We begin with the raw amino-acid sequence, 292 residues long: Mycothiol acetyltransferase (292 aa).

2 consecutive N-acetyltransferase domains span residues 2-138 (AEVV…PSAP) and 141-292 (VTVR…YAHS). 1D-myo-inositol 2-(L-cysteinylamino)-2-deoxy-alpha-D-glucopyranoside is bound at residue Glu-33. 68–70 (AVV) is an acetyl-CoA binding site. Positions 168, 215, and 225 each coordinate 1D-myo-inositol 2-(L-cysteinylamino)-2-deoxy-alpha-D-glucopyranoside. Acetyl-CoA contacts are provided by residues 229 to 231 (VAV) and 236 to 242 (QGRGLGR). Tyr-263 is a binding site for 1D-myo-inositol 2-(L-cysteinylamino)-2-deoxy-alpha-D-glucopyranoside. 268 to 273 (NAAALH) is an acetyl-CoA binding site.

Belongs to the acetyltransferase family. MshD subfamily. Monomer.

The enzyme catalyses 1D-myo-inositol 2-(L-cysteinylamino)-2-deoxy-alpha-D-glucopyranoside + acetyl-CoA = mycothiol + CoA + H(+). Its function is as follows. Catalyzes the transfer of acetyl from acetyl-CoA to desacetylmycothiol (Cys-GlcN-Ins) to form mycothiol. This is Mycothiol acetyltransferase from Tsukamurella paurometabola (strain ATCC 8368 / DSM 20162 / CCUG 35730 / CIP 100753 / JCM 10117 / KCTC 9821 / NBRC 16120 / NCIMB 702349 / NCTC 13040) (Corynebacterium paurometabolum).